Consider the following 150-residue polypeptide: Large ribosomal subunit protein bL9 (150 aa).

This sequence belongs to the bacterial ribosomal protein bL9 family.

Its function is as follows. Binds to the 23S rRNA. This chain is Large ribosomal subunit protein bL9, found in Polynucleobacter asymbioticus (strain DSM 18221 / CIP 109841 / QLW-P1DMWA-1) (Polynucleobacter necessarius subsp. asymbioticus).